The primary structure comprises 434 residues: Bifunctional protein GlmU (434 aa).

The interval M1–K226 is pyrophosphorylase. UDP-N-acetyl-alpha-D-glucosamine contacts are provided by residues L11 to G14, K25, Q77, and G84 to T85. D105 is a binding site for Mg(2+). 4 residues coordinate UDP-N-acetyl-alpha-D-glucosamine: G138, E152, N167, and N224. N224 lines the Mg(2+) pocket. Residues K227–S247 form a linker region. The segment at G248–K434 is N-acetyltransferase. 2 residues coordinate UDP-N-acetyl-alpha-D-glucosamine: R311 and K328. Residue H339 is the Proton acceptor of the active site. UDP-N-acetyl-alpha-D-glucosamine is bound by residues Y342 and N353. Acetyl-CoA is bound by residues A356, N362 to Y363, S381, and A399.

It in the N-terminal section; belongs to the N-acetylglucosamine-1-phosphate uridyltransferase family. This sequence in the C-terminal section; belongs to the transferase hexapeptide repeat family. Homotrimer. Mg(2+) is required as a cofactor.

It is found in the cytoplasm. The catalysed reaction is alpha-D-glucosamine 1-phosphate + acetyl-CoA = N-acetyl-alpha-D-glucosamine 1-phosphate + CoA + H(+). It carries out the reaction N-acetyl-alpha-D-glucosamine 1-phosphate + UTP + H(+) = UDP-N-acetyl-alpha-D-glucosamine + diphosphate. Its pathway is nucleotide-sugar biosynthesis; UDP-N-acetyl-alpha-D-glucosamine biosynthesis; N-acetyl-alpha-D-glucosamine 1-phosphate from alpha-D-glucosamine 6-phosphate (route II): step 2/2. It participates in nucleotide-sugar biosynthesis; UDP-N-acetyl-alpha-D-glucosamine biosynthesis; UDP-N-acetyl-alpha-D-glucosamine from N-acetyl-alpha-D-glucosamine 1-phosphate: step 1/1. It functions in the pathway bacterial outer membrane biogenesis; LPS lipid A biosynthesis. Catalyzes the last two sequential reactions in the de novo biosynthetic pathway for UDP-N-acetylglucosamine (UDP-GlcNAc). The C-terminal domain catalyzes the transfer of acetyl group from acetyl coenzyme A to glucosamine-1-phosphate (GlcN-1-P) to produce N-acetylglucosamine-1-phosphate (GlcNAc-1-P), which is converted into UDP-GlcNAc by the transfer of uridine 5-monophosphate (from uridine 5-triphosphate), a reaction catalyzed by the N-terminal domain. This Sulfurimonas denitrificans (strain ATCC 33889 / DSM 1251) (Thiomicrospira denitrificans (strain ATCC 33889 / DSM 1251)) protein is Bifunctional protein GlmU.